We begin with the raw amino-acid sequence, 277 residues long: Large ribosomal subunit protein uL2c (277 aa).

A disordered region spans residues 30–60 (RKKLTSGQHSGKGRNNRGIITSRHRGGGHKR). A compositionally biased stretch (basic residues) spans 51–60 (SRHRGGGHKR).

The protein belongs to the universal ribosomal protein uL2 family. Part of the 50S ribosomal subunit.

The protein localises to the plastid. Its subcellular location is the chloroplast. This is Large ribosomal subunit protein uL2c (rpl2) from Angiopteris evecta (Mule's foot fern).